The following is a 225-amino-acid chain: UPF0173 metal-dependent hydrolase Pars_0810 (225 aa).

It belongs to the UPF0173 family.

In Pyrobaculum arsenaticum (strain DSM 13514 / JCM 11321 / PZ6), this protein is UPF0173 metal-dependent hydrolase Pars_0810.